Reading from the N-terminus, the 628-residue chain is Phosphomethylpyrimidine synthase (628 aa).

Residues Asn-229, Met-258, Tyr-287, His-323, 343-345 (SRG), 384-387 (DGLR), and Glu-423 contribute to the substrate site. His-427 provides a ligand contact to Zn(2+). A substrate-binding site is contributed by Tyr-450. A Zn(2+)-binding site is contributed by His-491. [4Fe-4S] cluster contacts are provided by Cys-571, Cys-574, and Cys-579.

The protein belongs to the ThiC family. As to quaternary structure, homodimer. Requires [4Fe-4S] cluster as cofactor.

The catalysed reaction is 5-amino-1-(5-phospho-beta-D-ribosyl)imidazole + S-adenosyl-L-methionine = 4-amino-2-methyl-5-(phosphooxymethyl)pyrimidine + CO + 5'-deoxyadenosine + formate + L-methionine + 3 H(+). It participates in cofactor biosynthesis; thiamine diphosphate biosynthesis. Its function is as follows. Catalyzes the synthesis of the hydroxymethylpyrimidine phosphate (HMP-P) moiety of thiamine from aminoimidazole ribotide (AIR) in a radical S-adenosyl-L-methionine (SAM)-dependent reaction. The chain is Phosphomethylpyrimidine synthase from Variovorax paradoxus (strain S110).